The sequence spans 358 residues: Probable branched-chain-amino-acid aminotransferase (358 aa).

Residue Lys-196 is modified to N6-(pyridoxal phosphate)lysine.

It belongs to the class-IV pyridoxal-phosphate-dependent aminotransferase family. Pyridoxal 5'-phosphate is required as a cofactor.

It catalyses the reaction L-leucine + 2-oxoglutarate = 4-methyl-2-oxopentanoate + L-glutamate. The enzyme catalyses L-isoleucine + 2-oxoglutarate = (S)-3-methyl-2-oxopentanoate + L-glutamate. The catalysed reaction is L-valine + 2-oxoglutarate = 3-methyl-2-oxobutanoate + L-glutamate. Its pathway is amino-acid biosynthesis; L-isoleucine biosynthesis; L-isoleucine from 2-oxobutanoate: step 4/4. The protein operates within amino-acid biosynthesis; L-leucine biosynthesis; L-leucine from 3-methyl-2-oxobutanoate: step 4/4. It functions in the pathway amino-acid biosynthesis; L-valine biosynthesis; L-valine from pyruvate: step 4/4. Its function is as follows. Acts on leucine, isoleucine and valine. This chain is Probable branched-chain-amino-acid aminotransferase (ilvE), found in Staphylococcus epidermidis (strain ATCC 35984 / DSM 28319 / BCRC 17069 / CCUG 31568 / BM 3577 / RP62A).